The primary structure comprises 152 residues: Transcriptional regulator MraZ (152 aa).

SpoVT-AbrB domains follow at residues 5-52 (ATMV…PLPE) and 81-124 (ASEC…DEQT).

The protein belongs to the MraZ family. Forms oligomers.

The protein localises to the cytoplasm. The protein resides in the nucleoid. Functionally, negatively regulates its own expression and that of the subsequent genes in the proximal part of the division and cell wall (dcw) gene cluster. Acts by binding directly to DNA. May also regulate the expression of genes outside the dcw cluster. This chain is Transcriptional regulator MraZ, found in Yersinia pseudotuberculosis serotype O:1b (strain IP 31758).